The chain runs to 200 residues: Small ribosomal subunit protein eS1 (200 aa).

The protein belongs to the eukaryotic ribosomal protein eS1 family.

The sequence is that of Small ribosomal subunit protein eS1 from Thermococcus sibiricus (strain DSM 12597 / MM 739).